The following is a 133-amino-acid chain: Ribonuclease P protein component (133 aa).

The protein belongs to the RnpA family. In terms of assembly, consists of a catalytic RNA component (M1 or rnpB) and a protein subunit.

The enzyme catalyses Endonucleolytic cleavage of RNA, removing 5'-extranucleotides from tRNA precursor.. Functionally, RNaseP catalyzes the removal of the 5'-leader sequence from pre-tRNA to produce the mature 5'-terminus. It can also cleave other RNA substrates such as 4.5S RNA. The protein component plays an auxiliary but essential role in vivo by binding to the 5'-leader sequence and broadening the substrate specificity of the ribozyme. This Synechococcus sp. (strain JA-2-3B'a(2-13)) (Cyanobacteria bacterium Yellowstone B-Prime) protein is Ribonuclease P protein component.